The following is a 261-amino-acid chain: 4-hydroxy-tetrahydrodipicolinate reductase (261 aa).

Residues 11-16 (GFTGAM), 96-98 (GTT), and 122-125 (APNF) contribute to the NAD(+) site. His-152 acts as the Proton donor/acceptor in catalysis. A (S)-2,3,4,5-tetrahydrodipicolinate-binding site is contributed by His-153. Catalysis depends on Lys-156, which acts as the Proton donor. 162–163 (GT) contributes to the (S)-2,3,4,5-tetrahydrodipicolinate binding site.

Belongs to the DapB family.

It localises to the cytoplasm. It carries out the reaction (S)-2,3,4,5-tetrahydrodipicolinate + NAD(+) + H2O = (2S,4S)-4-hydroxy-2,3,4,5-tetrahydrodipicolinate + NADH + H(+). The catalysed reaction is (S)-2,3,4,5-tetrahydrodipicolinate + NADP(+) + H2O = (2S,4S)-4-hydroxy-2,3,4,5-tetrahydrodipicolinate + NADPH + H(+). The protein operates within amino-acid biosynthesis; L-lysine biosynthesis via DAP pathway; (S)-tetrahydrodipicolinate from L-aspartate: step 4/4. Its function is as follows. Catalyzes the conversion of 4-hydroxy-tetrahydrodipicolinate (HTPA) to tetrahydrodipicolinate. This chain is 4-hydroxy-tetrahydrodipicolinate reductase, found in Lactobacillus acidophilus (strain ATCC 700396 / NCK56 / N2 / NCFM).